Consider the following 206-residue polypeptide: Large ribosomal subunit protein uL4 (206 aa).

Residues 45-76 (RQGTQSAKTRTEVSGGGIKPWRQKGTGRARQG) form a disordered region.

This sequence belongs to the universal ribosomal protein uL4 family. Part of the 50S ribosomal subunit.

One of the primary rRNA binding proteins, this protein initially binds near the 5'-end of the 23S rRNA. It is important during the early stages of 50S assembly. It makes multiple contacts with different domains of the 23S rRNA in the assembled 50S subunit and ribosome. Its function is as follows. Forms part of the polypeptide exit tunnel. This is Large ribosomal subunit protein uL4 from Clostridium acetobutylicum (strain ATCC 824 / DSM 792 / JCM 1419 / IAM 19013 / LMG 5710 / NBRC 13948 / NRRL B-527 / VKM B-1787 / 2291 / W).